The chain runs to 423 residues: MALPARSDSGCAVPVEFTSAEQAAAHIGANSLQDGPIGRVGLEIEAHCFDLSNPTRRPSWDELSAVIADVPPLPGGSRITVEPGGAVELSGPPYDGPLAAVAALQADRAVLRAEFARRNLGLVLLGTDPLRPTRRVNPGARYSAMEQFFTASGTAEAGAAMMTATASVQVNLDAGPRDGWAERVRLAHALGPTMIAITANSPMLGGQFTGWCSTRQRVWGQLDSARCGPVLGVDGDDPASEWARYALRAPVMLVNSPDAVPVTNWVPFADWADGRAVLGGRRPTEADLDYHLTTLFPPVRPRRWLEIRYLDSVPDALWPAAVFTLTTLLDDPVAAESAAEATRPVATAWDRAARMGLTDRHLHTAALTCVRLAAERAPAELEESMTLLMRSVQQRRSPADDFSDRVVARGIAAAVRELAKGEL.

Belongs to the glutamate--cysteine ligase type 2 family. EgtA subfamily.

The catalysed reaction is L-cysteine + L-glutamate + ATP = gamma-L-glutamyl-L-cysteine + ADP + phosphate + H(+). It functions in the pathway amino-acid biosynthesis; ergothioneine biosynthesis. In terms of biological role, catalyzes the synthesis of gamma-glutamylcysteine (gamma-GC). This compound is used as substrate for the biosynthesis of the low-molecular thiol compound ergothioneine. The sequence is that of Glutamate--cysteine ligase EgtA from Mycolicibacterium smegmatis (strain ATCC 700084 / mc(2)155) (Mycobacterium smegmatis).